Reading from the N-terminus, the 91-residue chain is Secretoglobin family 3A member 2 (91 aa).

Residues 1–21 form the signal peptide; that stretch reads MKLVSIFLLVTIGICGYSATA.

It belongs to the secretoglobin family. UGRP subfamily. Homodimer; disulfide-linked. Monomer. Interacts with APOA1. As to expression, highly expressed in lung where it localizes to epithelial cells of the trachea, bronchus and bronchioles (at protein level). Expressed in club cells of the bronchioles. Also detected in the anterior and posterior lobes of the pituitary gland where it may localize to gonadotropic cells (at protein level). Not detected in other tissues tested.

It is found in the secreted. Its function is as follows. Secreted cytokine-like protein. Binds to the scavenger receptor MARCO. Can also bind to pathogens including the Gram-positive bacterium L.monocytogenes, the Gram-negative bacterium P.aeruginosa, and yeast. Strongly inhibits phospholipase A2 (PLA2G1B) activity. Seems to have anti-inflammatory effects in respiratory epithelium. Also has anti-fibrotic activity in lung. May play a role in fetal lung development and maturation. Promotes branching morphogenesis during early stages of lung development. In the pituitary, may inhibit production of follicle-stimulating hormone (FSH) and luteinizing hormone (LH). This chain is Secretoglobin family 3A member 2 (Scgb3a2), found in Mus musculus (Mouse).